A 73-amino-acid polypeptide reads, in one-letter code: Probable cytochrome b-c1 complex subunit 8 (73 aa).

The Mitochondrial matrix portion of the chain corresponds to 1–42 (MGQASKVFGKQITYSVSPFQQKLFVNYFKNAIPHLRRGVKDN). A helical membrane pass occupies residues 43 to 60 (FFCSVPYFAALYITVNWA). Residues 61-73 (NETYHNEMKDHWY) are Mitochondrial intermembrane-facing.

This sequence belongs to the UQCRQ/QCR8 family. Component of the ubiquinol-cytochrome c oxidoreductase (cytochrome b-c1 complex, complex III, CIII), a multisubunit enzyme composed of 3 respiratory subunits cytochrome b, cytochrome c1 and Rieske protein, 2 core protein subunits, and additional low-molecular weight protein subunits. The complex exists as an obligatory dimer and forms supercomplexes (SCs) in the inner mitochondrial membrane with cytochrome c oxidase (complex IV, CIV).

The protein localises to the mitochondrion inner membrane. Its function is as follows. Component of the ubiquinol-cytochrome c oxidoreductase, a multisubunit transmembrane complex that is part of the mitochondrial electron transport chain which drives oxidative phosphorylation. The respiratory chain contains 3 multisubunit complexes succinate dehydrogenase (complex II, CII), ubiquinol-cytochrome c oxidoreductase (cytochrome b-c1 complex, complex III, CIII) and cytochrome c oxidase (complex IV, CIV), that cooperate to transfer electrons derived from NADH and succinate to molecular oxygen, creating an electrochemical gradient over the inner membrane that drives transmembrane transport and the ATP synthase. The cytochrome b-c1 complex catalyzes electron transfer from ubiquinol to cytochrome c, linking this redox reaction to translocation of protons across the mitochondrial inner membrane, with protons being carried across the membrane as hydrogens on the quinol. In the process called Q cycle, 2 protons are consumed from the matrix, 4 protons are released into the intermembrane space and 2 electrons are passed to cytochrome c. The protein is Probable cytochrome b-c1 complex subunit 8 of Dictyostelium discoideum (Social amoeba).